The primary structure comprises 468 residues: Probable Xaa-Pro aminopeptidase PEPP (468 aa).

4 residues coordinate Mn(2+): D264, D275, E398, and E438.

It belongs to the peptidase M24B family. The cofactor is Mn(2+).

It catalyses the reaction Release of any N-terminal amino acid, including proline, that is linked to proline, even from a dipeptide or tripeptide.. In terms of biological role, catalyzes the removal of a penultimate prolyl residue from the N-termini of peptides. This Paracoccidioides brasiliensis (strain Pb03) protein is Probable Xaa-Pro aminopeptidase PEPP (PEPP).